The chain runs to 75 residues: Veswaprin-b (75 aa).

The signal sequence occupies residues 1-24 (MSSGGLLLLLGLLTLWAELTPISG). The interval 23–42 (SGQDRPKKPGLRPPRPQKPP) is disordered. Residues 27–72 (RPKKPGLRPPRPQKPPCVRECKNDWRCPGEQKCCRYGCIYECRDPI) form the WAP; atypical domain. Disulfide bonds link cysteine 43-cysteine 64, cysteine 47-cysteine 59, and cysteine 53-cysteine 68.

This sequence belongs to the venom waprin family. Expressed by the venom gland.

Its subcellular location is the secreted. Its function is as follows. Damages membranes of susceptible bacteria. Has no hemolytic activity. Not toxic to mice. Does not inhibit the proteinases elastase and cathepsin G. In Demansia vestigiata (Lesser black whip snake), this protein is Veswaprin-b.